Consider the following 800-residue polypeptide: Transcription initiation factor TFIID subunit 5 (800 aa).

Residues M1–A74 form a disordered region. The segment covering D30–N50 has biased composition (gly residues). The LisH domain maps to H92–E124. The interval A153–S189 is disordered. The segment covering G165–S189 has biased composition (low complexity). Residues D194 to D340 form an NTD2; involved in homo-dimerization; also involved in TFIID-TFIIF contacts in the RNA Pol II pre-initiation complex (PIC) region. The segment covering V384–N395 has biased composition (acidic residues). The segment at V384–L438 is disordered. Positions K407–D418 are enriched in basic and acidic residues. WD repeat units lie at residues N468–V507, G541–G580, G583–A624, G625–T666, G667–E706, and G709–E748.

It belongs to the WD repeat TAF5 family. In terms of assembly, homodimer. Component of the TFIID basal transcription factor complex, composed of TATA-box-binding protein TBP, and a number of TBP-associated factors (TAFs), including TAF1, TAF2, TAF3, TAF4, TAF5, TAF6, TAF7, TAF8, TAF9, TAF10, TAF11, TAF12 and TAF13. The TFIID complex structure can be divided into 3 modules TFIID-A, TFIID-B, and TFIID-C. TAF5 forms the TFIID-A module together with TAF3 and TBP, and in TFIID-B with TAF8. Component of the TFTC-HAT complex, at least composed of TAF5L, TAF6L, TADA3L, SUPT3H/SPT3, TAF2, TAF4, TAF5, GCN5L2/GCN5, TAF10 and TRRAP. TBP is not part of the TFTC-HAT complex. Interacts strongly with the histone H4-related TAF6 and the histone H3-related TAF9, as well as a stable complex comprised of both TAF6 and TAF9. Apparently weaker interactions with TBP, TAF1, TAF11, and TAF12, but not TAF7, also have been observed. As to quaternary structure, (Microbial infection) Interacts with SV40 Large T antigen.

The protein localises to the nucleus. Its function is as follows. The TFIID basal transcription factor complex plays a major role in the initiation of RNA polymerase II (Pol II)-dependent transcription. TFIID recognizes and binds promoters with or without a TATA box via its subunit TBP, a TATA-box-binding protein, and promotes assembly of the pre-initiation complex (PIC). The TFIID complex consists of TBP and TBP-associated factors (TAFs), including TAF1, TAF2, TAF3, TAF4, TAF5, TAF6, TAF7, TAF8, TAF9, TAF10, TAF11, TAF12 and TAF13. The TFIID complex structure can be divided into 3 modules TFIID-A, TFIID-B, and TFIID-C. TAF5 is involved in two modules of TFIID, in TFIID-A together with TAF3 and TBP, and in TFIID-B with TAF8. Involved in contacts between TFIID and TFIIF in the PIC. The protein is Transcription initiation factor TFIID subunit 5 (TAF5) of Homo sapiens (Human).